A 65-amino-acid polypeptide reads, in one-letter code: Large ribosomal subunit protein bL35 (65 aa).

Residues 1–52 form a disordered region; sequence MPKMKSNRAAAKRFKRTANGGFKSGNSFTSHRFHGKTKKQRRQLRGLSMMDK. Residues 31 to 44 show a composition bias toward basic residues; that stretch reads HRFHGKTKKQRRQL.

Belongs to the bacterial ribosomal protein bL35 family.

The sequence is that of Large ribosomal subunit protein bL35 from Limosilactobacillus reuteri (strain DSM 20016) (Lactobacillus reuteri).